The primary structure comprises 570 residues: Cytoplasmic polyadenylation element-binding protein 2 (570 aa).

An RRM domain is found at 434-516 (LVAFIGGVPR…KRVEIKPYFF (83 aa)).

Expressed specifically in the spermatogenic germ line.

In terms of biological role, cytoplasmic polyadenylation element binding protein that binds to and regulates the translation of specific mRNAs. Not required for oogenesis. The sequence is that of Cytoplasmic polyadenylation element-binding protein 2 (cpb-2) from Caenorhabditis elegans.